The chain runs to 360 residues: C-C chemokine receptor type 4 (360 aa).

The Extracellular segment spans residues 1–39; that stretch reads MNPTDIADTTLDESIYSNYYLYESIPKPCTKEGIKAFGE. Residues 40–67 traverse the membrane as a helical segment; that stretch reads LFLPPLYSLVFVFGLLGNSVVVLVLFKY. The Cytoplasmic segment spans residues 68-77; sequence KRLRSMTDVY. A helical transmembrane segment spans residues 78-98; sequence LLNLAISDLLFVFSLPFWGYY. The Extracellular portion of the chain corresponds to 99–111; that stretch reads AADQWVFGLGLCK. Cys110 and Cys187 are oxidised to a cystine. The chain crosses the membrane as a helical span at residues 112-133; it reads MISWMYLVGFYSGIFFVMLMSI. Topologically, residues 134–150 are cytoplasmic; that stretch reads DRYLAIVHAVFSLRART. A helical transmembrane segment spans residues 151–175; the sequence is LTYGVITSLATWSVAVFASLPGFLF. At 176–206 the chain is on the extracellular side; sequence STCYTERNHTYCKTKYSLNSTTWKVLSSLEI. Asn183 and Asn194 each carry an N-linked (GlcNAc...) asparagine glycan. A helical transmembrane segment spans residues 207 to 226; it reads NILGLVIPLGIMLFCYSMII. The Cytoplasmic portion of the chain corresponds to 227 to 242; sequence RTLQHCKNEKKNKAVK. Residues 243 to 267 form a helical membrane-spanning segment; sequence MIFAVVVLFLGFWTPYNIVLFLETL. The Extracellular segment spans residues 268-284; it reads VELEVLQDCTFERYLDY. The helical transmembrane segment at 285–308 threads the bilayer; the sequence is AIQATETLAFVHCCLNPIIYFFLG. Residues 309-360 lie on the Cytoplasmic side of the membrane; sequence EKFRKYILQLFKTCRGLFVLCQYCGLLQIYSADTPSSSYTQSTMDHDLHDAL.

It belongs to the G-protein coupled receptor 1 family. In natural killer cells, CCL22 binding induces phosphorylation on yet undefined Ser/Thr residues, most probably by beta-adrenergic receptor kinases 1 and 2. Predominantly expressed in the thymus, in peripheral blood leukocytes, including T-cells, mostly CD4+ cells, and basophils, and in platelets; at lower levels, in the spleen and in monocytes. Detected also in macrophages, IL-2-activated natural killer cells and skin-homing memory T-cells, mostly the ones expressing the cutaneous lymphocyte antigen (CLA). Expressed in brain microvascular and coronary artery endothelial cells.

The protein resides in the cell membrane. Its function is as follows. High affinity receptor for the C-C type chemokines CCL17/TARC, CCL22/MDC and CKLF isoform 1/CKLF1. The activity of this receptor is mediated by G(i) proteins which activate a phosphatidylinositol-calcium second messenger system. Can function as a chemoattractant homing receptor on circulating memory lymphocytes and as a coreceptor for some primary HIV-2 isolates. In the CNS, could mediate hippocampal-neuron survival. The chain is C-C chemokine receptor type 4 (CCR4) from Homo sapiens (Human).